Here is a 155-residue protein sequence, read N- to C-terminus: Reticulon-like protein B23 (155 aa).

The 155-residue stretch at 1–155 (MGEMGKAIGL…LNRRNGEILD (155 aa)) folds into the Reticulon domain. The next 2 membrane-spanning stretches (helical) occupy residues 30–50 (SLIS…GLLF) and 117–137 (IISG…SMLF).

The protein localises to the endoplasmic reticulum membrane. The sequence is that of Reticulon-like protein B23 (RTNLB23) from Arabidopsis thaliana (Mouse-ear cress).